The following is a 353-amino-acid chain: Uroporphyrinogen decarboxylase (353 aa).

Substrate-binding positions include 27-31 (RQAGR), Phe46, Asp76, Tyr152, Ser207, and His321.

Belongs to the uroporphyrinogen decarboxylase family. Homodimer.

The protein resides in the cytoplasm. It catalyses the reaction uroporphyrinogen III + 4 H(+) = coproporphyrinogen III + 4 CO2. Its pathway is porphyrin-containing compound metabolism; protoporphyrin-IX biosynthesis; coproporphyrinogen-III from 5-aminolevulinate: step 4/4. Its function is as follows. Catalyzes the decarboxylation of four acetate groups of uroporphyrinogen-III to yield coproporphyrinogen-III. The sequence is that of Uroporphyrinogen decarboxylase from Listeria monocytogenes serovar 1/2a (strain ATCC BAA-679 / EGD-e).